Consider the following 610-residue polypeptide: Threonine--tRNA ligase (610 aa).

Positions 1–29 (MANHDQQTVSSAAATTSASPSPVVLPKTS) are disordered. Positions 8-24 (TVSSAAATTSASPSPVV) are enriched in low complexity. Positions 209–502 (DHRRIGKDLD…MTENYAGDYP (294 aa)) are catalytic. The Zn(2+) site is built by Cys302, His353, and His479.

It belongs to the class-II aminoacyl-tRNA synthetase family. In terms of assembly, homodimer. Zn(2+) is required as a cofactor.

The protein localises to the cytoplasm. It carries out the reaction tRNA(Thr) + L-threonine + ATP = L-threonyl-tRNA(Thr) + AMP + diphosphate + H(+). Its function is as follows. Catalyzes the attachment of threonine to tRNA(Thr) in a two-step reaction: L-threonine is first activated by ATP to form Thr-AMP and then transferred to the acceptor end of tRNA(Thr). Also edits incorrectly charged L-seryl-tRNA(Thr). The sequence is that of Threonine--tRNA ligase from Synechococcus sp. (strain WH7803).